Here is a 369-residue protein sequence, read N- to C-terminus: 4-hydroxy-3-methylbut-2-en-1-yl diphosphate synthase (flavodoxin) (369 aa).

The [4Fe-4S] cluster site is built by C268, C271, C303, and E310.

This sequence belongs to the IspG family. [4Fe-4S] cluster is required as a cofactor.

It catalyses the reaction (2E)-4-hydroxy-3-methylbut-2-enyl diphosphate + oxidized [flavodoxin] + H2O + 2 H(+) = 2-C-methyl-D-erythritol 2,4-cyclic diphosphate + reduced [flavodoxin]. Its pathway is isoprenoid biosynthesis; isopentenyl diphosphate biosynthesis via DXP pathway; isopentenyl diphosphate from 1-deoxy-D-xylulose 5-phosphate: step 5/6. Its function is as follows. Converts 2C-methyl-D-erythritol 2,4-cyclodiphosphate (ME-2,4cPP) into 1-hydroxy-2-methyl-2-(E)-butenyl 4-diphosphate. This is 4-hydroxy-3-methylbut-2-en-1-yl diphosphate synthase (flavodoxin) from Exiguobacterium sibiricum (strain DSM 17290 / CCUG 55495 / CIP 109462 / JCM 13490 / 255-15).